The following is a 575-amino-acid chain: Putative diflavin flavoprotein A 4 (575 aa).

The tract at residues 41–234 is zinc metallo-hydrolase; the sequence is QRGTTANSYL…LGARSYAPGH (194 aa). In terms of domain architecture, Flavodoxin-like spans 263–405; it reads VALLYTSAYG…AGATFAQTLK (143 aa). The flavodoxin-reductase-like stretch occupies residues 429–575; it reads VGRIIGSLCV…AVEHRKSGSH (147 aa).

It in the N-terminal section; belongs to the zinc metallo-hydrolase group 3 family. The protein in the C-terminal section; belongs to the flavodoxin reductase family. Fe cation serves as cofactor.

Mediates electron transfer from NADH to oxygen, reducing it to water. This modular protein has 3 redox cofactors, in other organisms the same activity requires 2 or 3 proteins. The sequence is that of Putative diflavin flavoprotein A 4 (dfa4) from Nostoc sp. (strain PCC 7120 / SAG 25.82 / UTEX 2576).